A 419-amino-acid polypeptide reads, in one-letter code: 3-isopropylmalate dehydratase large subunit (419 aa).

Residues C300, C360, and C363 each contribute to the [4Fe-4S] cluster site.

Belongs to the aconitase/IPM isomerase family. LeuC type 2 subfamily. Heterodimer of LeuC and LeuD. Requires [4Fe-4S] cluster as cofactor.

The catalysed reaction is (2R,3S)-3-isopropylmalate = (2S)-2-isopropylmalate. Its pathway is amino-acid biosynthesis; L-leucine biosynthesis; L-leucine from 3-methyl-2-oxobutanoate: step 2/4. Its function is as follows. Catalyzes the isomerization between 2-isopropylmalate and 3-isopropylmalate, via the formation of 2-isopropylmaleate. This Clostridium botulinum (strain Eklund 17B / Type B) protein is 3-isopropylmalate dehydratase large subunit.